Consider the following 4923-residue polypeptide: Bridge-like lipid transfer protein family member 1 (4923 aa).

The chain crosses the membrane as a helical span at residues 25–45 (FVWLLVATIMSCGWIIYLTYY). Disordered regions lie at residues 160–179 (NRDEEKGREQRDKSLESVHI), 606–631 (HSKSPPDNNMPAEGQGAPPKNSKPRW), 1203–1277 (SLHV…SARL), 1300–1334 (FSSEVSRSDENVLDSPRQRRSYGSFPFTPSADSST), 1357–1400 (TEEF…SVEG), 1471–1494 (TNKRTSKSSLHRPLDLDTPTSEES), 1630–1660 (SAAKQEHKISKTEGTTPGSLSTPHGQTDLSI), 1878–1948 (RDGV…PDSS), 2191–2235 (SKSH…LQCN), 2262–2281 (PHRANEQTATKSSSLTRTGN), 2355–2375 (NTLDTHSQHSHSQHSTSQEDL), 2550–2655 (RYTA…SEQS), 2885–2910 (IRQPSNTPPPNREDTPTPQPSEVSIN), 3564–3596 (YSNSRSKSISAAGRPPMKRSDRPREDLPDIKVE), 3645–3695 (FSPT…RKSA), 3739–3797 (LHPS…SLQS), 3848–3884 (GMRDAPTPAPAPAASGPGKTNTLLSPPPPPLPSAKGK), 4017–4071 (PTSA…TGPP), 4102–4124 (AVTGLPPGPGPLGSVEDEASSVT), 4249–4309 (DGQT…AAAQ), and 4797–4827 (RMFASRPGQKSPTTQQDEPSSDKKEEREKEE). Residues 1210–1226 (SHSSASSSEENSSSSAA) show a composition bias toward low complexity. Over residues 1237–1248 (PSPSTELMNVTT) the composition is skewed to polar residues. Low complexity predominate over residues 1260-1271 (SPLRSPLKRQSS). Polar residues predominate over residues 1641–1658 (TEGTTPGSLSTPHGQTDL). Residues 1887 to 1898 (SSGSQTGSGYST) show a composition bias toward low complexity. Residues 1907–1920 (NDAQSPASEPNNNS) are compositionally biased toward polar residues. Residues 1921 to 1931 (DSDEQDEGVES) show a composition bias toward acidic residues. 2 stretches are compositionally biased toward polar residues: residues 2208–2218 (PYQSLSYTSGD) and 2267–2281 (EQTATKSSSLTRTGN). The segment covering 2550–2560 (RYTAGSSSPTP) has biased composition (polar residues). A compositionally biased stretch (basic and acidic residues) spans 2606-2624 (TRSREPRGRGTLGRSERRT). The segment covering 3581-3595 (KRSDRPREDLPDIKV) has biased composition (basic and acidic residues). A compositionally biased stretch (basic and acidic residues) spans 3746–3770 (TEHEDLALRRSCERSSRSLDQDSPP). Over residues 4017 to 4039 (PTSATYPSEGQHTPSSTPPSVHN) the composition is skewed to polar residues. Over residues 4044-4056 (PGGPSTGLGSPLG) the composition is skewed to low complexity. Composition is skewed to polar residues over residues 4249–4268 (DGQTTQHPSSSVFTDTTPSH), 4276–4286 (TGRTRSVSDSS), and 4804–4814 (GQKSPTTQQDE). Residues 4816 to 4827 (SSDKKEEREKEE) show a composition bias toward basic and acidic residues.

Its subcellular location is the cell membrane. The protein localises to the endoplasmic reticulum membrane. It localises to the mitochondrion membrane. Its function is as follows. Tube-forming lipid transport protein which provides phosphatidylethanolamine for glycosylphosphatidylinositol (GPI) anchor synthesis in the endoplasmic reticulum. Plays a role in endosomal trafficking and endosome recycling. Also involved in the actin cytoskeleton and cilia structural dynamics. Acts as a regulator of phagocytosis. The chain is Bridge-like lipid transfer protein family member 1 (bltp1) from Danio rerio (Zebrafish).